The sequence spans 143 residues: Nucleoside diphosphate kinase (143 aa).

Positions 11, 59, 87, 93, 104, and 114 each coordinate ATP. H117 acts as the Pros-phosphohistidine intermediate in catalysis.

The protein belongs to the NDK family. As to quaternary structure, homotetramer. Mg(2+) is required as a cofactor.

It localises to the cytoplasm. It carries out the reaction a 2'-deoxyribonucleoside 5'-diphosphate + ATP = a 2'-deoxyribonucleoside 5'-triphosphate + ADP. The enzyme catalyses a ribonucleoside 5'-diphosphate + ATP = a ribonucleoside 5'-triphosphate + ADP. Functionally, major role in the synthesis of nucleoside triphosphates other than ATP. The ATP gamma phosphate is transferred to the NDP beta phosphate via a ping-pong mechanism, using a phosphorylated active-site intermediate. This chain is Nucleoside diphosphate kinase, found in Escherichia coli O81 (strain ED1a).